The primary structure comprises 127 residues: MYPNLTGLGIHEPKQIERYSLRQEAHKDILKIYFRKQKGELFAKSVKFKYPRQVKSVLVSGGNNQYKEVTEINRNLTLVIDELNKITKPTPTAEVDLKQKILTDLRHLEKVVSSKIAEIEVDLEKLK.

It belongs to the UPF0325 family.

The chain is UPF0325 protein VS_2356 from Vibrio atlanticus (strain LGP32) (Vibrio splendidus (strain Mel32)).